Consider the following 403-residue polypeptide: GPI mannosyltransferase 1 (403 aa).

Over 1–4 (MTGE) the chain is Cytoplasmic. A helical membrane pass occupies residues 5–25 (EWGLTVLSFLVRVGFFLFGIY). Residues 26–78 (QDANFKVRYTDIDYFVFHDAAKYVYEGKSPYARDTYRYTPLLSWLLVPNHYFG) are Lumenal-facing. Residues 79-99 (WFHLGKVIFVIFDLVTGLIIM) form a helical membrane-spanning segment. Residues 100-110 (KLLNQAISRKR) are Cytoplasmic-facing. Residues 111–131 (ALILESIWLLNPMVITISTRG) form a helical membrane-spanning segment. A topological domain (lumenal) is located at residue N132. The helical transmembrane segment at 133 to 149 (AESVLCCLIMFTLFFLQ) threads the bilayer. Topologically, residues 150-160 (KSRYTLAGILY) are cytoplasmic. The chain crosses the membrane as a helical span at residues 161–181 (GLSIHFKIYPIIYCIPIAIFI). The Lumenal segment spans residues 182–193 (YYNKRNQGPRTQ). A helical transmembrane segment spans residues 194 to 214 (LTSLLNIGLSTLTTLLGCGWA). Over 215–266 (MYKIYGYEFLDQAYLYHLYRTDHRHNFSVWNMLLYLDSANKENGESNLSRYA) the chain is Cytoplasmic. The helical transmembrane segment at 267-287 (FVPQLLLVLVTGCLEWWNPTF) threads the bilayer. At 288 to 310 (DNLLRVLFVQTFAFVTYNKVCTS) the chain is on the lumenal side. The helical transmembrane segment at 311–331 (QYFVWYLIFLPFYLSRTHIGW) threads the bilayer. At 332–334 (KKG) the chain is on the cytoplasmic side. Residues 335 to 355 (LLMATLWVGTQGIWLSQGYYL) form a helical membrane-spanning segment. Residues 356-361 (EFEGKN) lie on the Lumenal side of the membrane. Residues 362-382 (VFYPGLFIASVLFFVTNVWLL) traverse the membrane as a helical segment. The Cytoplasmic segment spans residues 383 to 403 (GQFITDIKIPTQPTVSNKKNN).

This sequence belongs to the PIGM family.

The protein resides in the endoplasmic reticulum membrane. It functions in the pathway glycolipid biosynthesis; glycosylphosphatidylinositol-anchor biosynthesis. Its function is as follows. Mannosyltransferase involved in glycosylphosphatidylinositol-anchor biosynthesis. Transfers the first alpha-1,4-mannose to GlcN-acyl-PI during GPI precursor assembly. Required for cell wall integrity. This Saccharomyces cerevisiae (strain ATCC 204508 / S288c) (Baker's yeast) protein is GPI mannosyltransferase 1 (GPI14).